The following is a 207-amino-acid chain: Large ribosomal subunit protein uL4 (207 aa).

The disordered stretch occupies residues 50-76 (KTKTVSEVSGTTKKPFKQKGTGNARQG).

It belongs to the universal ribosomal protein uL4 family. As to quaternary structure, part of the 50S ribosomal subunit.

In terms of biological role, one of the primary rRNA binding proteins, this protein initially binds near the 5'-end of the 23S rRNA. It is important during the early stages of 50S assembly. It makes multiple contacts with different domains of the 23S rRNA in the assembled 50S subunit and ribosome. Its function is as follows. Forms part of the polypeptide exit tunnel. This chain is Large ribosomal subunit protein uL4, found in Rickettsia canadensis (strain McKiel).